We begin with the raw amino-acid sequence, 317 residues long: Zinc finger protein 771 (317 aa).

Over residues 1-17 the composition is skewed to acidic residues; that stretch reads MPGEQQAEEEEEEEMQE. The tract at residues 1-63 is disordered; sequence MPGEQQAEEE…APSADPARPH (63 aa). Lys33 is covalently cross-linked (Glycyl lysine isopeptide (Lys-Gly) (interchain with G-Cter in SUMO2)). The segment covering 33 to 49 has biased composition (basic and acidic residues); that stretch reads KYEVVKLKIPMDNKEVP. C2H2-type zinc fingers lie at residues 63 to 85, 91 to 113, 119 to 141, 147 to 169, 175 to 197, 203 to 225, 231 to 253, and 259 to 281; these read HACP…ARTH, FGCT…GRTH, YECP…RRRH, YACA…LRVH, YACP…RRTH, YACA…RRVH, HRCA…ARTH, and YPCA…RRAH.

This sequence belongs to the krueppel C2H2-type zinc-finger protein family.

Its subcellular location is the nucleus. Its function is as follows. May be involved in transcriptional regulation. The polypeptide is Zinc finger protein 771 (ZNF771) (Homo sapiens (Human)).